The chain runs to 810 residues: Protein 4.1 (810 aa).

Positions 1 to 124 (MTTEKSLVAE…KEIEFGTSLD (124 aa)) are disordered. Phosphoserine is present on S14. Phosphothreonine is present on T61. A compositionally biased stretch (basic and acidic residues) spans 62 to 76 (PTHEDLTKNKERTSE). Phosphoserine is present on residues S85, S86, S96, S105, S122, S150, S152, S153, S189, and S192. Basic and acidic residues predominate over residues 102 to 118 (DVESAKEKCEGGQKEIE). Residues 152–203 (SSAETQPAQEEHREDPDFETKEGGGLEECSKIEVKEESPESKAERELKASQK) are disordered. Residues 160 to 200 (QEEHREDPDFETKEGGGLEECSKIEVKEESPESKAERELKA) show a composition bias toward basic and acidic residues. Residues 211–492 (MHCKVSLLDD…EHHTFFRLTS (282 aa)) enclose the FERM domain. The residue at position 223 (Y223) is a Phosphotyrosine. T379 is modified (phosphothreonine). A disordered region spans residues 518–613 (TRQASALIDR…DQAEPEPTEV (96 aa)). S522, S541, S543, and S555 each carry phosphoserine. The span at 587–601 (AQKETVKDEEKKEEG) shows a compositional bias: basic and acidic residues. Positions 615–659 (KDLDKSQEEIKKHHASISELKKNFMESVPEPRPSEWDKRLSTHSP) are spectrin--actin-binding. Phosphoserine occurs at positions 620, 630, 655, and 658. The segment at 660–810 (FRTLNINGQL…VHQETEISEE (151 aa)) is C-terminal (CTD). Phosphothreonine occurs at positions 682 and 805.

Binds with a high affinity to glycophorin and with lower affinity to band III protein. Associates with the nuclear mitotic apparatus. Binds calmodulin, CPAP and DLG1. Also found to associate with contractile apparatus and tight junctions. Interacts with NUMA1; this interaction is negatively regulated by CDK1 during metaphase and promotes for anaphase-specific localization of NUMA1 in symmetrically dividing cells. Interacts with ATP2B1; regulates small intestinal calcium absorption through regulation of membrane expression of ATP2B1. Post-translationally, O-glycosylated; contains N-acetylglucosamine side chains in the C-terminal domain. In terms of processing, phosphorylated at multiple sites by different protein kinases and each phosphorylation event selectively modulates the protein's functions.

The protein localises to the nucleus. Its subcellular location is the cytoplasm. The protein resides in the cytoskeleton. It localises to the cell cortex. Functionally, protein 4.1 is a major structural element of the erythrocyte membrane skeleton. It plays a key role in regulating membrane physical properties of mechanical stability and deformability by stabilizing spectrin-actin interaction. Recruits DLG1 to membranes. Required for dynein-dynactin complex and NUMA1 recruitment at the mitotic cell cortex during anaphase. This chain is Protein 4.1, found in Canis lupus familiaris (Dog).